A 113-amino-acid chain; its full sequence is UPF0122 protein MGAS10270_Spy1030 (113 aa).

It belongs to the UPF0122 family.

In terms of biological role, might take part in the signal recognition particle (SRP) pathway. This is inferred from the conservation of its genetic proximity to ftsY/ffh. May be a regulatory protein. The protein is UPF0122 protein MGAS10270_Spy1030 of Streptococcus pyogenes serotype M2 (strain MGAS10270).